A 336-amino-acid chain; its full sequence is Fructose-1,6-bisphosphatase class 1 (336 aa).

The Mg(2+) site is built by glutamate 90, aspartate 112, leucine 114, and aspartate 115. Substrate-binding positions include 115–118 (DGSS), asparagine 211, and lysine 277. Position 283 (glutamate 283) interacts with Mg(2+).

This sequence belongs to the FBPase class 1 family. In terms of assembly, homotetramer. Mg(2+) is required as a cofactor.

The protein localises to the cytoplasm. The catalysed reaction is beta-D-fructose 1,6-bisphosphate + H2O = beta-D-fructose 6-phosphate + phosphate. Its pathway is carbohydrate biosynthesis; gluconeogenesis. This chain is Fructose-1,6-bisphosphatase class 1, found in Pseudomonas aeruginosa (strain UCBPP-PA14).